Here is a 101-residue protein sequence, read N- to C-terminus: Cell cycle protein GpsB (101 aa).

The stretch at 34–71 (LDMVIKDYETFNQEIEKLQQENLHLSKQLEEAVEQGKR) forms a coiled coil.

It belongs to the GpsB family. In terms of assembly, forms polymers through the coiled coil domains. Interacts with PBP1, MreC and EzrA.

The protein resides in the cytoplasm. Its function is as follows. Divisome component that associates with the complex late in its assembly, after the Z-ring is formed, and is dependent on DivIC and PBP2B for its recruitment to the divisome. Together with EzrA, is a key component of the system that regulates PBP1 localization during cell cycle progression. Its main role could be the removal of PBP1 from the cell pole after pole maturation is completed. Also contributes to the recruitment of PBP1 to the division complex. Not essential for septum formation. The protein is Cell cycle protein GpsB of Bacillus pumilus (strain SAFR-032).